A 416-amino-acid chain; its full sequence is ATP-dependent Clp protease ATP-binding subunit ClpX (416 aa).

The ClpX-type ZB domain occupies methionine 1 to valine 54. Positions 13, 16, 35, and 38 each coordinate Zn(2+). Proline 117–leucine 124 contributes to the ATP binding site.

Belongs to the ClpX chaperone family. As to quaternary structure, component of the ClpX-ClpP complex. Forms a hexameric ring that, in the presence of ATP, binds to fourteen ClpP subunits assembled into a disk-like structure with a central cavity, resembling the structure of eukaryotic proteasomes.

Functionally, ATP-dependent specificity component of the Clp protease. It directs the protease to specific substrates. Can perform chaperone functions in the absence of ClpP. In Halothermothrix orenii (strain H 168 / OCM 544 / DSM 9562), this protein is ATP-dependent Clp protease ATP-binding subunit ClpX.